A 1231-amino-acid polypeptide reads, in one-letter code: uncharacterized protein (1231 aa).

3 disordered regions span residues 171 to 197 (LKPDESIKSSMKKNVDGTGDSNKQHDD), 210 to 259 (DESF…HLPT), and 389 to 547 (ASPR…RSSR). The span at 440–450 (RSRHSHKRRSI) shows a compositional bias: basic residues. Ser-449, Ser-451, Ser-453, and Ser-455 each carry phosphoserine. Residues 458-502 (RGGRRAVRRSRSRSPRRSYNRGSTRSRSRSMRHRSRSPAHYRGRG) show a composition bias toward basic residues. Basic and acidic residues predominate over residues 503-541 (RGREPASKERGSSSRDFGGRHSLQRERERSSEYYHRNEG). Tyr-549 is modified (phosphotyrosine). 3 disordered regions span residues 570–591 (KTSSISPTASSNKEKEKEASEP), 950–981 (PNLDRDMSSMPINKQRRGRNTPSIMLDDDDEE), and 1058–1203 (TLSK…PPFN). Phosphoserine is present on residues Ser-573 and Ser-589. Thr-970 is modified (phosphothreonine). Residue Ser-972 is modified to Phosphoserine. The span at 1076–1103 (YMMNQQHGAPNAQNAPNLGQNPGQNLGQ) shows a compositional bias: polar residues. Low complexity predominate over residues 1118-1127 (QQQQQQQQQQ). Pro residues predominate over residues 1178–1203 (PPGPGGYVGPPPNPWASNVPPQPPFN).

This is an uncharacterized protein from Drosophila melanogaster (Fruit fly).